The sequence spans 352 residues: N-acetyl-gamma-glutamyl-phosphate reductase (352 aa).

Cysteine 155 is a catalytic residue.

The protein belongs to the NAGSA dehydrogenase family. Type 1 subfamily.

It is found in the cytoplasm. The enzyme catalyses N-acetyl-L-glutamate 5-semialdehyde + phosphate + NADP(+) = N-acetyl-L-glutamyl 5-phosphate + NADPH + H(+). It participates in amino-acid biosynthesis; L-arginine biosynthesis; N(2)-acetyl-L-ornithine from L-glutamate: step 3/4. In terms of biological role, catalyzes the NADPH-dependent reduction of N-acetyl-5-glutamyl phosphate to yield N-acetyl-L-glutamate 5-semialdehyde. The polypeptide is N-acetyl-gamma-glutamyl-phosphate reductase (Brachyspira hyodysenteriae (strain ATCC 49526 / WA1)).